The chain runs to 567 residues: MHGRLKVKTSEEQAEAKRLEREQKLKLYQSATQAVFQKRQAGELDESVLELTSQILGANPDFATLWNCRREVLQQLETQKSPEELAALVKAELGFLESCLRVNPKSYGTWHHRCWLLGRLPEPNWTRELELCARFLEVDERNFHCWDYRRFVATQAAVPPAEELAFTDSLITRNFSNYSSWHYRSCLLPQLHPQPDSGPQGRLPEDVLLKELELVQNAFFTDPNDQSAWFYHRWLLGRADPQDALRCLHVSRDEACLTVSFSRPLLVGSRMEILLLMVDDSPLIVEWRTPDGRNRPSHVWLCDLPAASLNDQLPQHTFRVIWTAGDVQKECVLLKGRQEGWCRDSTTDEQLFRCELSVEKSTVLQSELESCKELQELEPENKWCLLTIILLMRALDPLLYEKETLQYFQTLKAVDPMRATYLDDLRSKFLLENSVLKMEYAEVRVLHLAHKDLTVLCHLEQLLLVTHLDLSHNRLRTLPPALAALRCLEVLQASDNAIESLDGVTNLPRLQELLLCNNRLQQPAVLQPLASCPRLVLLNLQGNPLCQAVGILEQLAELLPSVSSVLT.

PFTA repeat units lie at residues 44–78 (LDES…QLET), 88–122 (LVKA…RLPE), 124–158 (NWTR…QAAV), 159–193 (PPAE…QLHP), 207–241 (VLLK…RADP), and 363–397 (VLQS…ALDP). Ser-98 carries the post-translational modification Phosphoserine. 5 LRR repeats span residues 442–463 (EVRV…EQLL), 464–486 (LVTH…AALR), 487–508 (CLEV…TNLP), 509–530 (RLQE…QPLA), and 534–555 (RLVL…LEQL).

Belongs to the protein prenyltransferase subunit alpha family. In terms of assembly, heterotrimer composed of RABGGTA, RABGGTB and CHM; within this trimer, RABGGTA and RABGGTB form the catalytic component B, while CHM (component A) mediates peptide substrate binding. The Rab GGTase dimer (RGGT) interacts with CHM (component A) prior to Rab protein binding; the association is stabilized by geranylgeranyl pyrophosphate (GGpp). The CHM:RGGT:Rab complex is destabilized by GGpp. Interacts with non-phosphorylated form of RAB8A; phosphorylation of RAB8A at 'Thr-72' disrupts this interaction.

The enzyme catalyses geranylgeranyl diphosphate + L-cysteinyl-[protein] = S-geranylgeranyl-L-cysteinyl-[protein] + diphosphate. The enzymatic reaction requires the aid of a Rab escort protein (also called component A), such as CHM. Its function is as follows. Catalyzes the transfer of a geranylgeranyl moiety from geranylgeranyl diphosphate to both cysteines of Rab proteins with the C-terminal sequence -XXCC, -XCXC and -CCXX, such as RAB1A, RAB3A, RAB5A and RAB7A. This is Geranylgeranyl transferase type-2 subunit alpha (RABGGTA) from Homo sapiens (Human).